The sequence spans 602 residues: Elongation factor 4 (602 aa).

Residues 7 to 189 form the tr-type G domain; it reads KYIRNFSIVA…AIVSKVPAPY (183 aa). Residues 19–24 and 136–139 each bind GTP; these read DHGKST and NKID.

Belongs to the TRAFAC class translation factor GTPase superfamily. Classic translation factor GTPase family. LepA subfamily.

It localises to the cell membrane. The catalysed reaction is GTP + H2O = GDP + phosphate + H(+). Its function is as follows. Required for accurate and efficient protein synthesis under certain stress conditions. May act as a fidelity factor of the translation reaction, by catalyzing a one-codon backward translocation of tRNAs on improperly translocated ribosomes. Back-translocation proceeds from a post-translocation (POST) complex to a pre-translocation (PRE) complex, thus giving elongation factor G a second chance to translocate the tRNAs correctly. Binds to ribosomes in a GTP-dependent manner. The sequence is that of Elongation factor 4 from Clostridium botulinum (strain Loch Maree / Type A3).